We begin with the raw amino-acid sequence, 261 residues long: Cytochrome c oxidase subunit 3 (261 aa).

The Mitochondrial matrix portion of the chain corresponds to 1 to 15; sequence MTHQTHAYHMVNPSP. The chain crosses the membrane as a helical span at residues 16 to 34; it reads WPLTGALSALLMTSGLIMW. The Mitochondrial intermembrane segment spans residues 35–40; that stretch reads FHFNST. The chain crosses the membrane as a helical span at residues 41-66; that stretch reads TLLMLGLTTNMLTMYQWWRDVIREST. The Mitochondrial matrix segment spans residues 67-72; it reads FQGHHT. Residues 73-105 form a helical membrane-spanning segment; that stretch reads PNVQKGLRYGMILFIISEVLFFTGFFWAFYHSS. Topologically, residues 106-128 are mitochondrial intermembrane; that stretch reads LAPTPELGGCWPPTGIHPLNPLE. Residues 129-152 form a helical membrane-spanning segment; the sequence is VPLLNTSVLLASGVSITWAHHSLM. The Mitochondrial matrix portion of the chain corresponds to 153–155; the sequence is EGN. Residues 156-183 traverse the membrane as a helical segment; the sequence is RNHMLQALFITIALGVYFTLLQASEYYE. Topologically, residues 184–190 are mitochondrial intermembrane; sequence APFTISD. Residues 191-223 form a helical membrane-spanning segment; it reads GVYGSTFFVATGFHGLHVIIGSTFLIVCFFRQL. Residues 224–232 are Mitochondrial matrix-facing; sequence KFHFTSNHH. Residues 233-256 form a helical membrane-spanning segment; it reads FGFEAAAWYWHFVDVVWLFLYVSI. At 257–261 the chain is on the mitochondrial intermembrane side; the sequence is YWWGS.

It belongs to the cytochrome c oxidase subunit 3 family. In terms of assembly, component of the cytochrome c oxidase (complex IV, CIV), a multisubunit enzyme composed of 14 subunits. The complex is composed of a catalytic core of 3 subunits MT-CO1, MT-CO2 and MT-CO3, encoded in the mitochondrial DNA, and 11 supernumerary subunits COX4I, COX5A, COX5B, COX6A, COX6B, COX6C, COX7A, COX7B, COX7C, COX8 and NDUFA4, which are encoded in the nuclear genome. The complex exists as a monomer or a dimer and forms supercomplexes (SCs) in the inner mitochondrial membrane with NADH-ubiquinone oxidoreductase (complex I, CI) and ubiquinol-cytochrome c oxidoreductase (cytochrome b-c1 complex, complex III, CIII), resulting in different assemblies (supercomplex SCI(1)III(2)IV(1) and megacomplex MCI(2)III(2)IV(2)).

The protein localises to the mitochondrion inner membrane. The catalysed reaction is 4 Fe(II)-[cytochrome c] + O2 + 8 H(+)(in) = 4 Fe(III)-[cytochrome c] + 2 H2O + 4 H(+)(out). Functionally, component of the cytochrome c oxidase, the last enzyme in the mitochondrial electron transport chain which drives oxidative phosphorylation. The respiratory chain contains 3 multisubunit complexes succinate dehydrogenase (complex II, CII), ubiquinol-cytochrome c oxidoreductase (cytochrome b-c1 complex, complex III, CIII) and cytochrome c oxidase (complex IV, CIV), that cooperate to transfer electrons derived from NADH and succinate to molecular oxygen, creating an electrochemical gradient over the inner membrane that drives transmembrane transport and the ATP synthase. Cytochrome c oxidase is the component of the respiratory chain that catalyzes the reduction of oxygen to water. Electrons originating from reduced cytochrome c in the intermembrane space (IMS) are transferred via the dinuclear copper A center (CU(A)) of subunit 2 and heme A of subunit 1 to the active site in subunit 1, a binuclear center (BNC) formed by heme A3 and copper B (CU(B)). The BNC reduces molecular oxygen to 2 water molecules using 4 electrons from cytochrome c in the IMS and 4 protons from the mitochondrial matrix. The polypeptide is Cytochrome c oxidase subunit 3 (MT-CO3) (Antilope cervicapra (Blackbuck)).